Consider the following 367-residue polypeptide: Aldo-keto reductase AMT2 (367 aa).

Position 76 (D76) interacts with NADP(+). Y81 acts as the Proton donor in catalysis. A substrate-binding site is contributed by H173. Residues 203–204 (SS), Q229, 258–268 (GPLAAGKLARP), and 330–338 (SSVERMDEV) contribute to the NADP(+) site. The disordered stretch occupies residues 346–367 (LSDEEESRLEDPYKAQPPQGHS).

This sequence belongs to the aldo/keto reductase family.

The protein operates within mycotoxin biosynthesis. Its function is as follows. Aldo-keto reductase; part of the gene clusters that mediate the biosynthesis of AM-toxins, host-selective toxins (HSTs) causing Alternaria blotch on apple, a worldwide distributed disease. AM-toxins are cyclic depsipeptides containing the 3 residues 2-hydroxy-isovaleric acid (2-HIV), dehydroalanine, L-alanine which are common for all 3 AM-toxins I to III. The fourth precursor is L-alpha-amino-methoxyphenyl-valeric acid (L-Amv) for AM-toxin I, L-alpha-amino-phenyl-valeric acid (L-Apv) for AM-toxin II, and L-alpha-amino-hydroxyphenyl-valeric acid (L-Ahv) for AM-toxin III. AM-toxins have two target sites for affecting susceptible apple cells; they cause invagination of the plasma membrane and electrolyte loss and chloroplast disorganization. The non-ribosomal peptide synthetase AMT1 contains 4 catalytic modules and is responsible for activation of each residue in AM-toxin. The aldo-keto reductase AMT2 catalyzes the conversion of 2-keto-isovaleric acid (2-KIV) to 2-hydroxy-isovaleric acid (2-HIV), one of the precursor residues incorporated by AMT1 during AM-toxin biosynthesis, by reduction of its ketone to an alcohol. The cytochrome P450 monooxygenase AMT3 and the thioesterase AMT4 are also important for AM-toxin production, but their exact function within the AM-toxin biosynthesis are not known yet. Up to 21 proteins (including AMT1 to AMT4) are predicted to be involved in AM-toxin biosynthesis since their expression ishighly up-regulated in AM-toxin-producing cultures. The protein is Aldo-keto reductase AMT2 of Alternaria alternata (Alternaria rot fungus).